Reading from the N-terminus, the 238-residue chain is Uridylate kinase (238 aa).

12–15 (KLSG) contributes to the ATP binding site. The interval 20–25 (GDEGFG) is involved in allosteric activation by GTP. Gly54 lines the UMP pocket. ATP contacts are provided by Gly55 and Arg59. UMP-binding positions include Asp74 and 135-142 (TGSPFFTT). Thr162, Tyr168, and Asp171 together coordinate ATP.

It belongs to the UMP kinase family. Homohexamer.

It localises to the cytoplasm. It catalyses the reaction UMP + ATP = UDP + ADP. It functions in the pathway pyrimidine metabolism; CTP biosynthesis via de novo pathway; UDP from UMP (UMPK route): step 1/1. Allosterically activated by GTP. Inhibited by UTP. Functionally, catalyzes the reversible phosphorylation of UMP to UDP. This chain is Uridylate kinase, found in Histophilus somni (strain 129Pt) (Haemophilus somnus).